The following is an 85-amino-acid chain: Senescence-associated and QQS-related protein (85 aa).

The segment covering 1 to 24 (MSFRKVEKKPTEMGRNMTHEKSDS) has biased composition (basic and acidic residues). Disordered stretches follow at residues 1–35 (MSFR…PMTV) and 55–85 (SGKA…FPNY). Positions 58 to 77 (ARSNYNLTGTAKGTGPINSF) are enriched in polar residues.

As to expression, expressed predominantly within leaves and cotyledons vasculatures. Mainly observed in fully expanded leaves, at the base of mature inflorescences, in senescing leaves and cauline leaves, and, to a lower extent, in hypocotyls and rosette leaves prior to flowering.

Its function is as follows. Plays a role in carbon allocation, including during senescence and stresses, thus impacting starch accumulation. The chain is Senescence-associated and QQS-related protein from Arabidopsis thaliana (Mouse-ear cress).